The sequence spans 493 residues: Leucine-rich repeat-containing protein 14 (493 aa).

One copy of the LRR 1; degenerate repeat lies at 111-146 (KHTLRVLDMTGLLDDGVEQDPGTMSMWDCTAAVART). Residues 194–218 (RLCCRDLRAEDLPMRNTVALLQLLD) form an LRR 2; degenerate repeat. One copy of the LRR 3; degenerate repeat lies at 219–246 (AGCLRRIDLRFNNLGLRGLSVIIPHVAR). Residues 247-282 (FQHLASLRLHYVHGDSRQPSVDGEDNFRYFLAQMGR) form an LRR 4; degenerate repeat. LRR repeat units follow at residues 283 to 307 (FICL…LSTL), 308 to 339 (QRPL…AHLK), 340 to 360 (KLDL…QGLL), 364 to 391 (AATL…TLTR), and 392 to 416 (CASL…LLRD).

This sequence belongs to the PRAME family. LRRC14 subfamily. In terms of assembly, interacts with IKBKB; disrupts IKBKB-IKBKG interaction preventing I-kappa-B-kinase (IKK) core complex formation and leading to a decrease of IKBKB phosphorylation and NF-kappaB activation. Interacts with CHUK.

The protein resides in the cytoplasm. Negatively regulates Toll-like receptor-mediated NF-kappa-B signaling by disrupting IKK core complex formation through interaction with IKBKB. The chain is Leucine-rich repeat-containing protein 14 from Rattus norvegicus (Rat).